Consider the following 251-residue polypeptide: Hydroxyacylglutathione hydrolase (251 aa).

7 residues coordinate Zn(2+): H53, H55, D57, H58, H110, D127, and H165.

Belongs to the metallo-beta-lactamase superfamily. Glyoxalase II family. As to quaternary structure, monomer. Requires Zn(2+) as cofactor.

The catalysed reaction is an S-(2-hydroxyacyl)glutathione + H2O = a 2-hydroxy carboxylate + glutathione + H(+). The protein operates within secondary metabolite metabolism; methylglyoxal degradation; (R)-lactate from methylglyoxal: step 2/2. In terms of biological role, thiolesterase that catalyzes the hydrolysis of S-D-lactoyl-glutathione to form glutathione and D-lactic acid. The chain is Hydroxyacylglutathione hydrolase from Escherichia coli (strain ATCC 8739 / DSM 1576 / NBRC 3972 / NCIMB 8545 / WDCM 00012 / Crooks).